The chain runs to 452 residues: CCA-adding enzyme (452 aa).

Residues Ser-54 and Arg-57 each contribute to the ATP site. CTP contacts are provided by Ser-54 and Arg-57. 3 residues coordinate Mg(2+): Asp-66, Asp-68, and Asp-117. His-140, Lys-160, and Tyr-169 together coordinate ATP. Residues His-140, Lys-160, and Tyr-169 each contribute to the CTP site.

Belongs to the tRNA nucleotidyltransferase/poly(A) polymerase family. Archaeal CCA-adding enzyme subfamily. Homodimer. Mg(2+) is required as a cofactor.

The catalysed reaction is a tRNA precursor + 2 CTP + ATP = a tRNA with a 3' CCA end + 3 diphosphate. The enzyme catalyses a tRNA with a 3' CCA end + 2 CTP + ATP = a tRNA with a 3' CCACCA end + 3 diphosphate. In terms of biological role, catalyzes the addition and repair of the essential 3'-terminal CCA sequence in tRNAs without using a nucleic acid template. Adds these three nucleotides in the order of C, C, and A to the tRNA nucleotide-73, using CTP and ATP as substrates and producing inorganic pyrophosphate. tRNA 3'-terminal CCA addition is required both for tRNA processing and repair. Also involved in tRNA surveillance by mediating tandem CCA addition to generate a CCACCA at the 3' terminus of unstable tRNAs. While stable tRNAs receive only 3'-terminal CCA, unstable tRNAs are marked with CCACCA and rapidly degraded. The polypeptide is CCA-adding enzyme (Halobacterium salinarum (strain ATCC 29341 / DSM 671 / R1)).